Consider the following 497-residue polypeptide: Serine/threonine-protein kinase cst-1 (497 aa).

The disordered stretch occupies residues 1 to 27 (MPPSTDSSRRNSEEGSSDGFKLDSSAL). The Protein kinase domain occupies 35-286 (FDIVGKLGEG…ALRLCEHTFI (252 aa)). ATP is bound by residues 41–49 (LGEGSYGSV) and Lys-64. Asp-154 (proton acceptor) is an active-site residue. The tract at residues 367–416 (KSAYIPGSSKNGNSPRVQPPGHTASASDPSKNQPFAQDGTGPNFQLGTSE) is disordered. Over residues 390–416 (ASASDPSKNQPFAQDGTGPNFQLGTSE) the composition is skewed to polar residues. The 48-residue stretch at 446-493 (FEFLRNITLDELIRRKESLDSEMEEEIRELQRRYKTKRQPILDVIEIK) folds into the SARAH domain. A coiled-coil region spans residues 450 to 486 (RNITLDELIRRKESLDSEMEEEIRELQRRYKTKRQPI).

This sequence belongs to the protein kinase superfamily. STE Ser/Thr protein kinase family. STE20 subfamily. As to quaternary structure, interacts with rsf-1 (via SARAH domain); the interaction is required for the phosphorylation of cst-1. The cofactor is Mg(2+). Proteolytically cleaved by caspase-3 during apoptosis which results in kinase activation. Post-translationally, phosphorylated. As to expression, widely expressed in epidermal cells.

The enzyme catalyses L-seryl-[protein] + ATP = O-phospho-L-seryl-[protein] + ADP + H(+). It catalyses the reaction L-threonyl-[protein] + ATP = O-phospho-L-threonyl-[protein] + ADP + H(+). Serine/threonine-protein kinase which extends lifespan and delays tissue aging, probably by activating daf-16. This chain is Serine/threonine-protein kinase cst-1, found in Caenorhabditis elegans.